A 155-amino-acid polypeptide reads, in one-letter code: Ribosome maturation factor RimP (155 aa).

The protein belongs to the RimP family.

It localises to the cytoplasm. Functionally, required for maturation of 30S ribosomal subunits. This is Ribosome maturation factor RimP from Staphylococcus carnosus (strain TM300).